The following is a 294-amino-acid chain: Protease HtpX (294 aa).

The next 2 membrane-spanning stretches (helical) occupy residues 4 to 24 (IALFLLTNLAVMVVFGLVLSL) and 34 to 52 (GLLIMALLFGFGGSIVSLM). Zn(2+) is bound at residue H139. E140 is an active-site residue. H143 is a Zn(2+) binding site. Transmembrane regions (helical) follow at residues 158–178 (VVNTFVIFISRVIAQIAAGFL) and 194–214 (LIYFAVATVLELVFGILASII). Residue E223 participates in Zn(2+) binding.

Belongs to the peptidase M48B family. Zn(2+) serves as cofactor.

Its subcellular location is the cell inner membrane. This Klebsiella pneumoniae subsp. pneumoniae (strain ATCC 700721 / MGH 78578) protein is Protease HtpX.